We begin with the raw amino-acid sequence, 1009 residues long: Type VII secretion system accessory factor EsaA (1009 aa).

6 consecutive transmembrane segments (helical) span residues 7-27, 822-842, 869-889, 903-923, 928-948, and 979-999; these read IYAL…IFFV, ISPT…AYIF, VITS…VGLI, KFIL…TYLL, SIGM…MNNL, and IGLA…LNMF.

This sequence belongs to the EsaA family. In terms of assembly, homodimer. Interacts with EssB.

Its subcellular location is the cell membrane. In terms of biological role, component of the type VII secretion system (Ess). Provides together with EssB and other components such as EssC and EssE a secretion platform across the cytoplasmic membrane in the host. This chain is Type VII secretion system accessory factor EsaA, found in Staphylococcus aureus (strain MSSA476).